Here is a 121-residue protein sequence, read N- to C-terminus: Protein yippee-like At3g55890 (121 aa).

In terms of domain architecture, Yippee spans 12-109; sequence NIYICKLCKT…LELYKISGPH (98 aa). Residues Cys16, Cys19, Cys72, and Cys75 each contribute to the Zn(2+) site.

The protein belongs to the yippee family.

This chain is Protein yippee-like At3g55890, found in Arabidopsis thaliana (Mouse-ear cress).